Reading from the N-terminus, the 1050-residue chain is MWLRQSSGGGVASAGHGGPLRQRPIDAATDCDPRACYDSFCKHWQQAFEIIQHSAPPSHDDVLGVVSHLDYMVTLLLVELHHCNKVSLPAAEASGPPAAPCLEFLLSENLLDKLYEWACTTGRYANAVRLEQLKLYELLVSHSRHQLLCHEPFLRPLLKILASSQGEIFPPDLEKRLVILLNQLCVVLMQNVHLLDLFFFSAQTQVQEQILNGNVAPPKSGTTTNFIIFSLLIPYVHREGSLGHQARDALLLCMALSQKNSNIGTYIAQYSSICPLLVTGLGGLYSRLPNSIEISSIDWHRITPDDVTEIPELTLFMNALEFCNAVVQVAHEMIKQQLLDFMYQGFIVPVLGPAILQTLKGKHFQTNIDSQISAMSYLDLILRSITEPGLLRAFVRFLLDTEKFDGERILDALVERLNSPDANLCMVTMALFDTLLGLHCEDLMLELLLKFMLPGKHVPISHRHKINKIDPYLNSSEFFLDLSPDVMKRARDLARPKSVHEPVVSDLTPLPSLPSPVMSKTIGANWNYYGVHTGDSLYANIQAYLFEAHWRIAQCQRDCLKWANSYRYQKWPRHGQGRVHAHALELARQFFSEFGGGPIAANETSEKQLDSLQSIGESSGYESFKWRPADEESEATDTTLATTASEADLDHNSSSLSSVLGASSKREAWRTSNNNRNELILTDLEFSEDLFAQGTVSLGPFLNAIWGKLQTFTSNSLYVNLHLTGLITRLAWYPLPLIHSLLLRSDIAITSDTPSFHQVLRILKQQIDAELPVTEDSLEIIDVARSSLIDREFRLANARKGNEGSPMHHSQQQQMATNSGQQQGQLRSAYATLSAATPVQATPTSAYDPFKRSDNKRRSISKSITSMFSRKSASNTSTTPPNGSSASSGLSQIYAFFTGAASNLVGTNASTDGRGMSHAQTSAGTCETSLSTQPQAGAPRTGAIATSATASGSNSSIAGSTLTLSAQSNTTTHSASTLHGLDGGPSTGGFNSEPASLDSVASMGIIASTSGTERSRDLALCAVLMDEWLKELAAIAQEQSVVLVTEQGSL.

2 positions are modified to phosphoserine: Ser-498 and Ser-805. Disordered stretches follow at residues 800–827, 865–888, 911–954, and 968–995; these read KGNE…GQLR, TSMF…SASS, TDGR…SGSN, and SNTT…SEPA. Polar residues predominate over residues 808-826; the sequence is HHSQQQQMATNSGQQQGQL. A compositionally biased stretch (low complexity) spans 872–888; the sequence is SASNTSTTPPNGSSASS. Residues 918 to 935 are compositionally biased toward polar residues; sequence HAQTSAGTCETSLSTQPQ. The span at 941–954 shows a compositional bias: low complexity; it reads TGAIATSATASGSN. Over residues 968-977 the composition is skewed to polar residues; it reads SNTTTHSAST.

This sequence belongs to the FHIP family.

This is FHIP family protein GE18198 from Drosophila yakuba (Fruit fly).